The chain runs to 161 residues: Putative pre-16S rRNA nuclease (161 aa).

The protein belongs to the YqgF nuclease family.

It localises to the cytoplasm. Could be a nuclease involved in processing of the 5'-end of pre-16S rRNA. This is Putative pre-16S rRNA nuclease from Rhodospirillum rubrum (strain ATCC 11170 / ATH 1.1.1 / DSM 467 / LMG 4362 / NCIMB 8255 / S1).